Here is a 339-residue protein sequence, read N- to C-terminus: Protoheme IX farnesyltransferase (339 aa).

The disordered stretch occupies residues 1–27 (MTVADPRLTDAPAHSRTSLLGRRRGGR). 9 helical membrane-spanning segments follow: residues 45–65 (IVELLLITTIPVMLFAAGGLP), 67–87 (GWLILTTFVGGALAAGCANTL), 117–136 (ALVFATVLGIASTAIFVAFV), 140–159 (SAALALGAILLYVVGYTLLL), 165–185 (QNIVWGGVAGCMQVLIGWTAV), 191–211 (WAPFVLFGVIFLWTPPHYWPL), 236–256 (VSRQIVLYTIAMVLCSLLLVP), 257–277 (LGGAGVVYGAAALVLGIGFLV), and 309–329 (PMGVFHGSITYLTLLSAAVAV).

The protein belongs to the UbiA prenyltransferase family. Protoheme IX farnesyltransferase subfamily.

Its subcellular location is the cell membrane. It catalyses the reaction heme b + (2E,6E)-farnesyl diphosphate + H2O = Fe(II)-heme o + diphosphate. The protein operates within porphyrin-containing compound metabolism; heme O biosynthesis; heme O from protoheme: step 1/1. Converts heme B (protoheme IX) to heme O by substitution of the vinyl group on carbon 2 of heme B porphyrin ring with a hydroxyethyl farnesyl side group. The chain is Protoheme IX farnesyltransferase from Kineococcus radiotolerans (strain ATCC BAA-149 / DSM 14245 / SRS30216).